A 258-amino-acid chain; its full sequence is 6-carboxyhexanoate--CoA ligase (258 aa).

Belongs to the BioW family. In terms of assembly, homodimer. The cofactor is Mg(2+).

It carries out the reaction heptanedioate + ATP + CoA = 6-carboxyhexanoyl-CoA + AMP + diphosphate. It participates in metabolic intermediate metabolism; pimeloyl-CoA biosynthesis; pimeloyl-CoA from pimelate: step 1/1. Functionally, catalyzes the transformation of pimelate into pimeloyl-CoA with concomitant hydrolysis of ATP to AMP. In Bacillus subtilis (strain BSn5), this protein is 6-carboxyhexanoate--CoA ligase.